The chain runs to 173 residues: RNA pyrophosphohydrolase (173 aa).

One can recognise a Nudix hydrolase domain in the interval 11–164; sequence PYRRCVGVVV…KKHVYRKVVS (154 aa). Residues 52–73 carry the Nudix box motif; sequence GGIDEGEEPLDAACRELYEETG.

It belongs to the Nudix hydrolase family. RppH subfamily. A divalent metal cation serves as cofactor.

In terms of biological role, accelerates the degradation of transcripts by removing pyrophosphate from the 5'-end of triphosphorylated RNA, leading to a more labile monophosphorylated state that can stimulate subsequent ribonuclease cleavage. This is RNA pyrophosphohydrolase from Bartonella quintana (strain Toulouse) (Rochalimaea quintana).